Reading from the N-terminus, the 870-residue chain is Outer membrane usher protein FimD (870 aa).

Positions 1-27 (MKKTTWFAGRFPGYVSPLSSVALSVLA) are cleaved as a signal peptide. The cysteines at positions 843 and 865 are disulfide-linked.

The protein belongs to the fimbrial export usher family.

It is found in the cell outer membrane. Involved in the export and assembly of FimA fimbrial subunits across the outer membrane. The polypeptide is Outer membrane usher protein FimD (fimD) (Salmonella typhimurium (strain LT2 / SGSC1412 / ATCC 700720)).